Consider the following 119-residue polypeptide: Large ribosomal subunit protein bL20 (119 aa).

The protein belongs to the bacterial ribosomal protein bL20 family.

In terms of biological role, binds directly to 23S ribosomal RNA and is necessary for the in vitro assembly process of the 50S ribosomal subunit. It is not involved in the protein synthesizing functions of that subunit. The sequence is that of Large ribosomal subunit protein bL20 from Streptococcus suis (strain 98HAH33).